The following is a 200-amino-acid chain: ATP synthase subunit b 2 (200 aa).

Residues Met-1–Thr-16 are compositionally biased toward polar residues. The interval Met-1–Ala-38 is disordered. The chain crosses the membrane as a helical span at residues Thr-46 to Ser-66.

It belongs to the ATPase B chain family. F-type ATPases have 2 components, F(1) - the catalytic core - and F(0) - the membrane proton channel. F(1) has five subunits: alpha(3), beta(3), gamma(1), delta(1), epsilon(1). F(0) has three main subunits: a(1), b(2) and c(10-14). The alpha and beta chains form an alternating ring which encloses part of the gamma chain. F(1) is attached to F(0) by a central stalk formed by the gamma and epsilon chains, while a peripheral stalk is formed by the delta and b chains.

It is found in the cell inner membrane. Functionally, f(1)F(0) ATP synthase produces ATP from ADP in the presence of a proton or sodium gradient. F-type ATPases consist of two structural domains, F(1) containing the extramembraneous catalytic core and F(0) containing the membrane proton channel, linked together by a central stalk and a peripheral stalk. During catalysis, ATP synthesis in the catalytic domain of F(1) is coupled via a rotary mechanism of the central stalk subunits to proton translocation. In terms of biological role, component of the F(0) channel, it forms part of the peripheral stalk, linking F(1) to F(0). The b'-subunit is a diverged and duplicated form of b found in plants and photosynthetic bacteria. The chain is ATP synthase subunit b 2 (atpF2) from Methylorubrum populi (strain ATCC BAA-705 / NCIMB 13946 / BJ001) (Methylobacterium populi).